We begin with the raw amino-acid sequence, 248 residues long: Pyridoxine 5'-phosphate synthase (248 aa).

Asparagine 12 is a binding site for 3-amino-2-oxopropyl phosphate. Residue aspartate 14–histidine 15 participates in 1-deoxy-D-xylulose 5-phosphate binding. Arginine 23 contacts 3-amino-2-oxopropyl phosphate. The Proton acceptor role is filled by histidine 48. 1-deoxy-D-xylulose 5-phosphate-binding residues include arginine 50 and histidine 55. Glutamate 75 functions as the Proton acceptor in the catalytic mechanism. 1-deoxy-D-xylulose 5-phosphate is bound at residue threonine 105. Residue histidine 196 is the Proton donor of the active site. 3-amino-2-oxopropyl phosphate contacts are provided by residues glycine 197 and glycine 218 to histidine 219.

Belongs to the PNP synthase family. As to quaternary structure, homooctamer; tetramer of dimers.

It is found in the cytoplasm. It catalyses the reaction 3-amino-2-oxopropyl phosphate + 1-deoxy-D-xylulose 5-phosphate = pyridoxine 5'-phosphate + phosphate + 2 H2O + H(+). Its pathway is cofactor biosynthesis; pyridoxine 5'-phosphate biosynthesis; pyridoxine 5'-phosphate from D-erythrose 4-phosphate: step 5/5. Its function is as follows. Catalyzes the complicated ring closure reaction between the two acyclic compounds 1-deoxy-D-xylulose-5-phosphate (DXP) and 3-amino-2-oxopropyl phosphate (1-amino-acetone-3-phosphate or AAP) to form pyridoxine 5'-phosphate (PNP) and inorganic phosphate. The protein is Pyridoxine 5'-phosphate synthase of Stutzerimonas stutzeri (strain A1501) (Pseudomonas stutzeri).